The following is a 371-amino-acid chain: Glutamate 5-kinase (371 aa).

Lys8 contributes to the ATP binding site. Positions 49, 136, and 149 each coordinate substrate. ATP-binding positions include 169–170 (TD) and 213–219 (TGGMATK). The region spanning 278–356 (TGKLILDDGA…EDIPQVLGYA (79 aa)) is the PUA domain.

This sequence belongs to the glutamate 5-kinase family.

It is found in the cytoplasm. The enzyme catalyses L-glutamate + ATP = L-glutamyl 5-phosphate + ADP. It functions in the pathway amino-acid biosynthesis; L-proline biosynthesis; L-glutamate 5-semialdehyde from L-glutamate: step 1/2. Its function is as follows. Catalyzes the transfer of a phosphate group to glutamate to form L-glutamate 5-phosphate. This Acaryochloris marina (strain MBIC 11017) protein is Glutamate 5-kinase.